The chain runs to 331 residues: MTVAVFLAILCLRAALAAPRPDYSLDAEWEEWKRNNAKTYSPEEEKQRRAVWEENVKMIKWHTMQNGLWMNNFTIEMNEFGDMTGEEMRMMTDSSALTLRNGKHIQKRNVKIPKTLDWRDTGCVAPVRSQGGCGACWAFSVAASIESQLFKKTGKLIPLSVQNLIDCTVTYGNNDCSGGKPYTAFQYVKNNGGLEAEATYPYEAKLRHCRYRPERSVVKIARFFVVPRNEEALMQALVTYGPIAVAIDGSHASFKRYRGGIYHEPKCRRDTLDHGLLLVGYGYEGHESENRKYWLLKNSHGEQWGERGYMKLPRDQNNYCGIASYAMYPLL.

A signal peptide spans 1-17 (MTVAVFLAILCLRAALA). The propeptide at 18 to 111 (APRPDYSLDA…GKHIQKRNVK (94 aa)) is activation peptide. A Nuclear localization signal motif is present at residues 33 to 50 (KRNNAKTYSPEEEKQRRA). Residue N72 is glycosylated (N-linked (GlcNAc...) asparagine). Disulfide bonds link C133–C176, C167–C209, and C267–C320. The active site involves C136. Catalysis depends on residues H274 and N298.

Belongs to the peptidase C1 family.

The protein resides in the endosome. The protein localises to the lysosome. It localises to the cytoplasm. Its subcellular location is the perinuclear region. It is found in the golgi apparatus. The protein resides in the nucleus. The protein localises to the secreted. It localises to the extracellular space. In terms of biological role, involved in trophoblast cell proliferation and differentiation probably by affecting mitotic cell cycle progression. Proteolytic activity and nuclear localization are essential for its role in cell cycle progression. The sequence is that of Cathepsin 7 (Cts7) from Rattus norvegicus (Rat).